Here is a 462-residue protein sequence, read N- to C-terminus: Integrator complex subunit 12 (462 aa).

Residues 42 to 129 (GIDSSYRPSQ…LEKPETQSSP (88 aa)) are disordered. Polar residues predominate over residues 59–86 (ISSTKNISIKQEPKISSSLPSGNNNGKV). Lys68 is covalently cross-linked (Glycyl lysine isopeptide (Lys-Gly) (interchain with G-Cter in SUMO2)). Positions 88-124 (TTEKVKKEAEKRPADKMKSDITEGVDIPKKPRLEKPE) are enriched in basic and acidic residues. Ser128 carries the post-translational modification Phosphoserine. The segment at 159-215 (GLACVVCRQMMVASGNQLVECQECHNLYHRDCHKPQVTDKEANDPRLVWYCARCTRQ) adopts a PHD-type zinc-finger fold. Lys254 participates in a covalent cross-link: Glycyl lysine isopeptide (Lys-Gly) (interchain with G-Cter in SUMO2). Residues 301 to 328 (SSAGPSTAKLSSTTQNSTGKPATSSANQ) show a composition bias toward polar residues. Residues 301–462 (SSAGPSTAKL…KKAAQKKLKK (162 aa)) form a disordered region. Composition is skewed to low complexity over residues 347 to 358 (KIGSNNSTTPTV) and 396 to 437 (GNSS…GPTS). Residues 449–462 (QMVKKKAAQKKLKK) show a composition bias toward basic residues.

It belongs to the Integrator subunit 12 family. Component of the Integrator complex, composed of core subunits INTS1, INTS2, INTS3, INTS4, INTS5, INTS6, INTS7, INTS8, INTS9/RC74, INTS10, INTS11/CPSF3L, INTS12, INTS13, INTS14 and INTS15. The core complex associates with protein phosphatase 2A subunits PPP2CA and PPP2R1A, to form the Integrator-PP2A (INTAC) complex. Post-translationally, dephosphorylated at Ser-128 by the PNUTS-PP1 complex, promoting RNA polymerase II transcription pause-release.

It is found in the nucleus. Component of the integrator complex, a multiprotein complex that terminates RNA polymerase II (Pol II) transcription in the promoter-proximal region of genes. The integrator complex provides a quality checkpoint during transcription elongation by driving premature transcription termination of transcripts that are unfavorably configured for transcriptional elongation: the complex terminates transcription by (1) catalyzing dephosphorylation of the C-terminal domain (CTD) of Pol II subunit POLR2A/RPB1 and SUPT5H/SPT5, (2) degrading the exiting nascent RNA transcript via endonuclease activity and (3) promoting the release of Pol II from bound DNA. The integrator complex is also involved in terminating the synthesis of non-coding Pol II transcripts, such as enhancer RNAs (eRNAs), small nuclear RNAs (snRNAs), telomerase RNAs and long non-coding RNAs (lncRNAs). Mediates recruitment of cytoplasmic dynein to the nuclear envelope, probably as component of the integrator complex. The chain is Integrator complex subunit 12 (INTS12) from Macaca fascicularis (Crab-eating macaque).